The primary structure comprises 494 residues: Amidophosphoribosyltransferase (494 aa).

Positions 1–10 (MSNYSGLNEE) are excised as a propeptide. Cys-11 acts as the Nucleophile in catalysis. Residues 11–231 (CGVFGIWNHP…AGEYVVITDE (221 aa)) enclose the Glutamine amidotransferase type-2 domain. Mg(2+) is bound by residues Ser-294, Asp-356, and Asp-357.

In the C-terminal section; belongs to the purine/pyrimidine phosphoribosyltransferase family. Mg(2+) is required as a cofactor.

The catalysed reaction is 5-phospho-beta-D-ribosylamine + L-glutamate + diphosphate = 5-phospho-alpha-D-ribose 1-diphosphate + L-glutamine + H2O. The protein operates within purine metabolism; IMP biosynthesis via de novo pathway; N(1)-(5-phospho-D-ribosyl)glycinamide from 5-phospho-alpha-D-ribose 1-diphosphate: step 1/2. In terms of biological role, catalyzes the formation of phosphoribosylamine from phosphoribosylpyrophosphate (PRPP) and glutamine. The protein is Amidophosphoribosyltransferase of Staphylococcus epidermidis (strain ATCC 35984 / DSM 28319 / BCRC 17069 / CCUG 31568 / BM 3577 / RP62A).